Reading from the N-terminus, the 759-residue chain is Arylphorin subunit A4 (759 aa).

Residues 1–16 (MKIAIVLLAIIALVAA) form the signal peptide.

Belongs to the hemocyanin family. Heterohexamer. Fat body.

It localises to the secreted. It is found in the extracellular space. Its function is as follows. Arylphorin is a larval storage protein (LSP) which may serve as a storage protein used primarily as a source of aromatic amino acids for protein synthesis during metamorphosis. It is a constituent of the sclerotizing system of the cuticle, and serves as a carrier for ecdysteroid hormone. This Calliphora vicina (Blue blowfly) protein is Arylphorin subunit A4.